Here is a 185-residue protein sequence, read N- to C-terminus: Peptide deformylase (185 aa).

Residues Cys-109 and His-152 each coordinate Fe cation. The active site involves Glu-153. A Fe cation-binding site is contributed by His-156.

The protein belongs to the polypeptide deformylase family. Fe(2+) serves as cofactor.

It catalyses the reaction N-terminal N-formyl-L-methionyl-[peptide] + H2O = N-terminal L-methionyl-[peptide] + formate. Its function is as follows. Removes the formyl group from the N-terminal Met of newly synthesized proteins. Requires at least a dipeptide for an efficient rate of reaction. N-terminal L-methionine is a prerequisite for activity but the enzyme has broad specificity at other positions. In Roseiflexus castenholzii (strain DSM 13941 / HLO8), this protein is Peptide deformylase.